The following is a 150-amino-acid chain: 3-hydroxyacyl-[acyl-carrier-protein] dehydratase FabZ (150 aa).

H52 is an active-site residue.

This sequence belongs to the thioester dehydratase family. FabZ subfamily.

Its subcellular location is the cytoplasm. It catalyses the reaction a (3R)-hydroxyacyl-[ACP] = a (2E)-enoyl-[ACP] + H2O. Its function is as follows. Involved in unsaturated fatty acids biosynthesis. Catalyzes the dehydration of short chain beta-hydroxyacyl-ACPs and long chain saturated and unsaturated beta-hydroxyacyl-ACPs. The sequence is that of 3-hydroxyacyl-[acyl-carrier-protein] dehydratase FabZ from Albidiferax ferrireducens (strain ATCC BAA-621 / DSM 15236 / T118) (Rhodoferax ferrireducens).